The primary structure comprises 89 residues: Small ribosomal subunit protein bS20 (89 aa).

Residues 1-28 (MANHYSALKRARQTETRTARNRANTSRM) are disordered.

It belongs to the bacterial ribosomal protein bS20 family.

Its function is as follows. Binds directly to 16S ribosomal RNA. This is Small ribosomal subunit protein bS20 from Koribacter versatilis (strain Ellin345).